Here is a 382-residue protein sequence, read N- to C-terminus: Inactive ubiquitin-specific protease 5 (382 aa).

In terms of domain architecture, DUSP spans 16–141 (VPAEEERALI…GGPTLPRKAI (126 aa)). Residues 323-382 (TGLLNLGNTCFMNSAIQCLVHTPEFARYFREDYHREINWQNPLGMVVSTLSTSMALKPYV) enclose the USP domain.

The protein belongs to the peptidase C19 family. In terms of tissue distribution, widely expressed with the highest expression in floral organs.

Its subcellular location is the cell membrane. Plays an important role in the development of floral organs and chloroplasts. Does not possess deubiquitinating enzyme activity in vitro. The polypeptide is Inactive ubiquitin-specific protease 5 (Oryza sativa subsp. japonica (Rice)).